The following is a 555-amino-acid chain: Hydroxylamine reductase (555 aa).

[4Fe-4S] cluster-binding residues include C5, C8, C17, and C23. Hybrid [4Fe-2O-2S] cluster-binding residues include H248, E272, C316, C408, C436, C461, E496, and K498. C408 bears the Cysteine persulfide mark.

Belongs to the HCP family. The cofactor is [4Fe-4S] cluster. Hybrid [4Fe-2O-2S] cluster is required as a cofactor.

Its subcellular location is the cytoplasm. It carries out the reaction A + NH4(+) + H2O = hydroxylamine + AH2 + H(+). Functionally, catalyzes the reduction of hydroxylamine to form NH(3) and H(2)O. The sequence is that of Hydroxylamine reductase from Halothermothrix orenii (strain H 168 / OCM 544 / DSM 9562).